Consider the following 221-residue polypeptide: Cytidylate kinase (221 aa).

7 to 15 contributes to the ATP binding site; that stretch reads GPSASGKSS.

It belongs to the cytidylate kinase family. Type 1 subfamily.

Its subcellular location is the cytoplasm. The catalysed reaction is CMP + ATP = CDP + ADP. The enzyme catalyses dCMP + ATP = dCDP + ADP. The chain is Cytidylate kinase from Borreliella burgdorferi (strain ZS7) (Borrelia burgdorferi).